The following is an 85-amino-acid chain: Small ribosomal subunit protein uS15c (85 aa).

This sequence belongs to the universal ribosomal protein uS15 family. Part of the 30S ribosomal subunit.

It is found in the plastid. It localises to the chloroplast. The polypeptide is Small ribosomal subunit protein uS15c (rps15) (Chaetosphaeridium globosum (Charophycean green alga)).